Here is a 141-residue protein sequence, read N- to C-terminus: Albumin-8 (141 aa).

The first 25 residues, 1 to 25, serve as a signal peptide directing secretion; the sequence is MARFSIVFAAAGVLLLVAMAPVSEA. A propeptide spanning residues 26–38 is cleaved from the precursor; that stretch reads STTTIITTIIEEN. 4 cysteine pairs are disulfide-bonded: C49–C100, C62–C89, C90–C132, and C102–C139.

This sequence belongs to the 2S seed storage albumins family. In terms of assembly, heterodimer; disulfide-linked.

Its function is as follows. This is a 2S seed storage protein. This is Albumin-8 from Helianthus annuus (Common sunflower).